The chain runs to 460 residues: uncharacterized protein (460 aa).

In terms of domain architecture, TRAM spans Asn-9–Glu-67. Residues Gln-292, Tyr-321, Glu-342, and Asp-390 each coordinate S-adenosyl-L-methionine. Catalysis depends on Cys-417, which acts as the Nucleophile.

It belongs to the class I-like SAM-binding methyltransferase superfamily. RNA M5U methyltransferase family.

This is an uncharacterized protein from Lactococcus lactis subsp. lactis (strain IL1403) (Streptococcus lactis).